The primary structure comprises 183 residues: Ribosome-recycling factor (183 aa).

Belongs to the RRF family.

The protein resides in the cytoplasm. Functionally, responsible for the release of ribosomes from messenger RNA at the termination of protein biosynthesis. May increase the efficiency of translation by recycling ribosomes from one round of translation to another. The chain is Ribosome-recycling factor from Mycoplasma genitalium (strain ATCC 33530 / DSM 19775 / NCTC 10195 / G37) (Mycoplasmoides genitalium).